The following is a 373-amino-acid chain: MTSTPIIPADLLPADGRFGCGPSKVRPEQLQSLVEVGSSVFGTSHRQKPVKDVVASVRSGLADLFSLPEGYEVVLGNGGTTAFWDAAAFGLIREKSLHLTNGEFSSKFASVAKNNPFIGDPIVVSADPGSAPEPVSDPSVDLIGWAHNETSTGVAIPVSRPAGSENALIAIDATSGAGGLPVNVADADVYYFAPQKCFAADGGLWIALMSPKALERVAEIKDSGRWTPDFLSLPIAVDNSSKDQTYNTPALATLLLLANQIDWLNGKGGLDWATSRTADSSSRLYQWAEASEYATPFVTDPAHRSQVVGTIDFDDKIDAAQVAKILRANGVVDTEPYRKLGRNQLRVGMFPAIDPEDVSQLTKSIDWVVSQLG.

R46 is a binding site for L-glutamate. Positions 104, 150, 172, and 195 each coordinate pyridoxal 5'-phosphate. Residue K196 is modified to N6-(pyridoxal phosphate)lysine. 247–248 (NT) lines the pyridoxal 5'-phosphate pocket.

This sequence belongs to the class-V pyridoxal-phosphate-dependent aminotransferase family. SerC subfamily. As to quaternary structure, homodimer. The cofactor is pyridoxal 5'-phosphate.

The protein resides in the cytoplasm. The enzyme catalyses O-phospho-L-serine + 2-oxoglutarate = 3-phosphooxypyruvate + L-glutamate. It carries out the reaction 4-(phosphooxy)-L-threonine + 2-oxoglutarate = (R)-3-hydroxy-2-oxo-4-phosphooxybutanoate + L-glutamate. It functions in the pathway amino-acid biosynthesis; L-serine biosynthesis; L-serine from 3-phospho-D-glycerate: step 2/3. It participates in cofactor biosynthesis; pyridoxine 5'-phosphate biosynthesis; pyridoxine 5'-phosphate from D-erythrose 4-phosphate: step 3/5. Functionally, catalyzes the reversible conversion of 3-phosphohydroxypyruvate to phosphoserine and of 3-hydroxy-2-oxo-4-phosphonooxybutanoate to phosphohydroxythreonine. The polypeptide is Phosphoserine aminotransferase (Rhodococcus jostii (strain RHA1)).